The sequence spans 1041 residues: Sodium/potassium-transporting ATPase subunit alpha (1041 aa).

Transmembrane regions (helical) follow at residues 115–135 (FGGF…AYSI), 147–167 (NLYL…FSYY), 312–332 (LITG…FILG), and 338–358 (AVIF…LATV). D394 (4-aspartylphosphate intermediate) is an active-site residue. K526 lines the ATP pocket. The next 4 helical transmembrane spans lie at 808 to 828 (FLAF…ILCI), 870 to 890 (MAYG…YFVI), 935 to 955 (TCHT…LIIC), and 970 to 990 (WALN…SYCP).

Belongs to the cation transport ATPase (P-type) (TC 3.A.3) family. Type IIC subfamily. The sodium/potassium-transporting ATPase is composed of a catalytic alpha subunit, an auxiliary non-catalytic beta subunit and an additional regulatory subunit. High levels are found in some adult tissues: Malpighian tubules, indirect flight muscles, tubular leg muscles and throughout the nervous system (brain, optic lobes, retina and ventral thoracic neuromere). Lower levels are detected at the posterior end where the reproductive organs and rectum are located.

Its subcellular location is the cell membrane. It catalyses the reaction K(+)(out) + Na(+)(in) + ATP + H2O = K(+)(in) + Na(+)(out) + ADP + phosphate + H(+). In terms of biological role, this is the catalytic component of the active enzyme, which catalyzes the hydrolysis of ATP coupled with the exchange of sodium and potassium ions across the plasma membrane. This action creates the electrochemical gradient of sodium and potassium ions, providing the energy for active transport of various nutrients. The sequence is that of Sodium/potassium-transporting ATPase subunit alpha (Atpalpha) from Drosophila melanogaster (Fruit fly).